A 594-amino-acid chain; its full sequence is MNNSITDSVEKKPEQVSFEVQPNALRPVAFHVFTRKYDLNINRDSLQELASFVSKKCGSQWRSQCEPLLDEIAKTWKRVHETQPIVTRPLLIPVLANLNVPHEVRVSSLARVQTLETTGSFLNSSNSEIRETIKNEKYFRVLDAFKMPKFKYDSSRKVFVLSKQSPTLMASASACTDMLNRRFNVVYSRILRNESFQTPSFSGSFSQTGTYQLTPIRNLLGRAGNTFLLFGLLTIAPDGTLWLEDLDSQVQLDVSQAEQGFGLFCPGCLVLVNGQFLSSGLFLVFELGHPPIERRDASLKALNNLDILGLNMDAKQLALLRHAEQAYQSQAFVCISEVHLDNHQTFYALEKIFQKYESSEAVPFCIILCGSFMSSAFHNSGSSIQYKEGFNKLAASLEKFPKICEKTKFIFVPGPNDPWTTNGISLMPKHSIPLHFVNRIQRVCKHTIFASNPCRIIFFSQEVLIYRDDISGRFQRNSLKFGKTPQGTSNINSIPLAEQQVHQQRKLVKTVLDQSHLSPFPSRTRPILWDFDYALSVFPLPSCMGLIDSESSAFDVHYGGCPTFNPGALLLGVHYNWQEVFPVKKEIITHKERI.

The protein belongs to the DNA polymerase epsilon subunit B family. In terms of assembly, heterotetramer. Consists of four subunits: pol2, dpb2, dpb3 and dpb4. Interacts with dpb3.

The protein localises to the nucleus. Its function is as follows. As accessory component of the DNA polymerase epsilon (DNA polymerase II) participates in chromosomal DNA replication. This is DNA polymerase epsilon subunit B (dpb2) from Schizosaccharomyces pombe (strain 972 / ATCC 24843) (Fission yeast).